Consider the following 342-residue polypeptide: MSLLDMGGDMMEDDWEFASSSNPKRTLVLVGRTGNGKSATGNSILGRKAFRSRARTVGVTSTCESQRVVQEDGDIINVVDTPGLFDLSTAADFIGKEIVRCISLAEDGIHAILLVFSVRRLAEEEQTVLSFLQALFGSKIADYMIVVFTGGDELEENEETLEEYLADYCPEFLKEILGICDNRLVLFNNKTTDKVKKAEQVQKLLSLVESVVKQNNGKPYSDELFHELQEEAIKLRDQKKEVELLQGYSNNEIDEFKKQIDMSYDRQLSRITEMVETKLRDTAKRLEQQLGEEQAARLEAEKRANEVQKRSSDEIKKLRENLERAEKETKELQKKLGKCINL.

The AIG1-type G domain maps to 22-229; that stretch reads NPKRTLVLVG…YSDELFHELQ (208 aa). A G1 region spans residues 31 to 38; sequence GRTGNGKS. Residues 31–39 and serine 52 contribute to the GTP site; that span reads GRTGNGKSA. Residues 58–62 are G2; the sequence is GVTST. Positions 80–83 are G3; the sequence is DTPG. The tract at residues 149–152 is G4; it reads TGGD. Residues 188–190 form a G5 region; the sequence is NNK. Asparagine 189 is a binding site for GTP. Residues 276 to 342 are a coiled coil; it reads ETKLRDTAKR…QKKLGKCINL (67 aa).

Belongs to the TRAFAC class TrmE-Era-EngA-EngB-Septin-like GTPase superfamily. AIG1/Toc34/Toc159-like paraseptin GTPase family. IAN subfamily. As to expression, mainly expressed in leaves.

In Arabidopsis thaliana (Mouse-ear cress), this protein is Immune-associated nucleotide-binding protein 9.